We begin with the raw amino-acid sequence, 280 residues long: uncharacterized protein (280 aa).

2 disordered regions span residues 1–124 (MPRD…QREA) and 177–280 (LEEE…LSSK). 2 stretches are compositionally biased toward basic residues: residues 16-36 (SRRRKHSRSPVRQRHSRRSRR) and 48-83 (YSRRKSRSISPRRHRSRSVTPKRRSPTPKRYKRQKS). 2 stretches are compositionally biased toward basic and acidic residues: residues 102–124 (AKNRNGEKLKREEEERKRRQREA) and 182–259 (EASL…ERLK).

This is an uncharacterized protein from Arabidopsis thaliana (Mouse-ear cress).